A 162-amino-acid polypeptide reads, in one-letter code: Selenoprotein F (162 aa).

Residues 1–28 (MAAGQGGWLRPALGLRLLLATAFQAVSA) form the signal peptide. Residue Sec93 is a non-standard amino acid, selenocysteine.

This sequence belongs to the selenoprotein M/F family. In terms of assembly, forms a tight complex with UGGT1/UGCGL1. Interacts with UGGT2/UGCGL2. Interacts with RDH11.

It is found in the endoplasmic reticulum lumen. In terms of biological role, may be involved in redox reactions associated with the formation of disulfide bonds. May contribute to the quality control of protein folding in the endoplasmic reticulum. May regulate protein folding by enhancing the catalytic activity of UGGT1/UGCGL1 and UGGT2/UGCGL2. The protein is Selenoprotein F of Mus musculus (Mouse).